Consider the following 131-residue polypeptide: D-ribose pyranase (131 aa).

The active-site Proton donor is His-20. Substrate is bound by residues Asp-28, His-98, and 120–122 (YAN).

Belongs to the RbsD / FucU family. RbsD subfamily. As to quaternary structure, homodecamer.

The protein localises to the cytoplasm. The catalysed reaction is beta-D-ribopyranose = beta-D-ribofuranose. The protein operates within carbohydrate metabolism; D-ribose degradation; D-ribose 5-phosphate from beta-D-ribopyranose: step 1/2. Its function is as follows. Catalyzes the interconversion of beta-pyran and beta-furan forms of D-ribose. This is D-ribose pyranase from Clostridium perfringens (strain SM101 / Type A).